A 280-amino-acid polypeptide reads, in one-letter code: NSNNINLSYDDQQRLIYSGTEQKYPTSNQLKSYPNGLLNPFNGTNFMHPTIQSNSLITRHPNNNSFQLNTTNDSNNNNTTNNGNDSRSHLYDISTFNAQNPYSLTNTLNFNSRTMNNQLTMNDSMKLNGNLTLHDTNYHALLNGSTSFGSTVFRSLVNSENQSYLNSSTNMLMNSSLDNINNSNDHSTLNDNNNDCIGQSLRQSGNSSESNVVVYPWMNPKGTDISVDQKRTRQTYTRYQTLELEKEFHFNKYLTRRRRIEIAHTLTLTERQIKIWFQNR.

The interval 61–88 (PNNNSFQLNTTNDSNNNNTTNNGNDSRS) is disordered. Residues 69–85 (NTTNDSNNNNTTNNGND) are compositionally biased toward low complexity. The short motif at 214–219 (VYPWMN) is the Antp-type hexapeptide element. The homeobox DNA-binding region spans 229–280 (QKRTRQTYTRYQTLELEKEFHFNKYLTRRRRIEIAHTLTLTERQIKIWFQNR).

Belongs to the Antp homeobox family.

The protein resides in the nucleus. This chain is Homeobox protein SMOX-1 (SMOX-1), found in Schistosoma mansoni (Blood fluke).